A 106-amino-acid chain; its full sequence is Large ribosomal subunit protein eL42 (106 aa).

This sequence belongs to the eukaryotic ribosomal protein eL42 family.

In Meyerozyma guilliermondii (strain ATCC 6260 / CBS 566 / DSM 6381 / JCM 1539 / NBRC 10279 / NRRL Y-324) (Yeast), this protein is Large ribosomal subunit protein eL42 (RPL44).